A 124-amino-acid chain; its full sequence is Large ribosomal subunit protein bL21 (124 aa).

The protein belongs to the bacterial ribosomal protein bL21 family. In terms of assembly, part of the 50S ribosomal subunit. Contacts protein L20.

Functionally, this protein binds to 23S rRNA in the presence of protein L20. This is Large ribosomal subunit protein bL21 from Synechococcus sp. (strain WH7803).